The primary structure comprises 343 residues: Putative trace amine-associated receptor 3 (343 aa).

The Extracellular portion of the chain corresponds to 1-35 (MDLTYIPEDLSSCPKFVNKILSSHQPLFSCPGDNV). The chain crosses the membrane as a helical span at residues 36–56 (FGYDWSHDYPLFGNLVIMVSI). The Cytoplasmic segment spans residues 57 to 68 (SHFKQLHSPTNF). Residues 69–89 (LILSMATTDFLLGFVIMPYSI) traverse the membrane as a helical segment. Residues 90 to 150 (MRSVESCWYF…TKMTNSTIKQ (61 aa)) are Extracellular-facing. Cysteine 104 and cysteine 189 form a disulfide bridge. N-linked (GlcNAc...) asparagine glycosylation is present at asparagine 145. The chain crosses the membrane as a helical span at residues 151–168 (LLAFCWSVPALFSFGLVL). Residues 169-172 (SEAD) are Cytoplasmic-facing. The interval 173-186 (VSGMQSYKILVACF) is extracellular Loop 2 (ECL2). The helical transmembrane segment at 173 to 193 (VSGMQSYKILVACFNFCALTF) threads the bilayer. Residues 194–198 (NKFWG) lie on the Extracellular side of the membrane. The chain crosses the membrane as a helical span at residues 199–223 (TILFTTCFFTPGSIMVGIYGKIFIV). Over 224-257 (SKQHARVISHVPENTKGAVKKHLSKKKDRKAAKT) the chain is Cytoplasmic. A helical transmembrane segment spans residues 258–278 (LGIVMGVFLACWLPCFLAVLI). Residues 279-287 (DPYLDYSTP) are Extracellular-facing. The chain crosses the membrane as a helical span at residues 288-308 (ILILDLLVWLRYFNSTCNPLI). Topologically, residues 309 to 343 (HGFFNPWFQKAFKYIVSGKIFSSHSETANLFPEAH) are cytoplasmic.

Belongs to the G-protein coupled receptor 1 family. As to expression, not expressed in the pons, thalamus, globus pallidus, caudate, putamen or cerebellum.

It is found in the cell membrane. Putative olfactory receptor activated by several primary trace amines. The sequence is that of Putative trace amine-associated receptor 3 from Homo sapiens (Human).